The sequence spans 119 residues: MKKKYRIKKNDDFQKVFRRGKSFANRQFVVYTLKQEGSTHFRIGLSVSKKIGNAVCRNRIKRYIRQSFHELESQINPENEYIIIARKPAANMDFHEVKKSLIHVLKVGRVLKQKPNNSK.

This sequence belongs to the RnpA family. As to quaternary structure, consists of a catalytic RNA component (M1 or rnpB) and a protein subunit.

It carries out the reaction Endonucleolytic cleavage of RNA, removing 5'-extranucleotides from tRNA precursor.. RNaseP catalyzes the removal of the 5'-leader sequence from pre-tRNA to produce the mature 5'-terminus. It can also cleave other RNA substrates such as 4.5S RNA. The protein component plays an auxiliary but essential role in vivo by binding to the 5'-leader sequence and broadening the substrate specificity of the ribozyme. The chain is Ribonuclease P protein component from Listeria monocytogenes serotype 4a (strain HCC23).